Here is a 310-residue protein sequence, read N- to C-terminus: Methionyl-tRNA formyltransferase (310 aa).

Residue 111–114 (SILP) participates in (6S)-5,6,7,8-tetrahydrofolate binding.

This sequence belongs to the Fmt family.

The catalysed reaction is L-methionyl-tRNA(fMet) + (6R)-10-formyltetrahydrofolate = N-formyl-L-methionyl-tRNA(fMet) + (6S)-5,6,7,8-tetrahydrofolate + H(+). Attaches a formyl group to the free amino group of methionyl-tRNA(fMet). The formyl group appears to play a dual role in the initiator identity of N-formylmethionyl-tRNA by promoting its recognition by IF2 and preventing the misappropriation of this tRNA by the elongation apparatus. This chain is Methionyl-tRNA formyltransferase, found in Methylobacterium sp. (strain 4-46).